A 188-amino-acid chain; its full sequence is Elongation factor P-like protein (188 aa).

Belongs to the elongation factor P family.

This Xylella fastidiosa (strain 9a5c) protein is Elongation factor P-like protein.